Here is a 1435-residue protein sequence, read N- to C-terminus: MQESFLNFCQEINFDIPEYLKNTKIANPYHDEEKSFFSCEIDFLETPKFEDFKSFYLKTKNFLNQLVKEQKLLFKIENIFYEKSEIKKYLDWIAEHFFKNFDFKNTFRIDDLKVNLDGKIFLTAHSKHSFDLYKDFVEFANKKMQSFGFENFLLKLELNQIEITNNQPLVSSINSQVKTQASSENQSFKKSNFYNKKRHIQLSLKELIKTQEMFVSVVGMVFKKEIITTNSKTKIFKISITDFQEATRAQKFSYLEKDQEIFDSIQINDWVNVCGEIQLEKMSLKQFIKIEKIEKIRSPIKDRQDNEKEKRIELSFRSKMSTMDGILSPLDIVKQAKKFNHSSIAILDHNSVQAFPDFHNLTYKDKDFKVIYGMTLSVISKRNKIFVEPLKDKFFDYKILDQEYVVYDIETTGLSPMLNELIQFGASVIKNGRIIETHHFFIKPKSKLDSFTTKLTGITQEHLEKGYELQEALEKISSIFKARIMVAHNAAFDHNFLKQKFIDNNIEFEEMISIDTLNLAKVLNPIYRSYRLGEVASKLSVVYDPSIAHRADYDSSVLTNIFILQMSHLKEKGINLFKELNSLSSEKFYSKMFAKDISIIAKNQAGLKELFKINSDVLTKYYFANPKMFWEDIKRSKNLLIGSGGLNSPLIDKLLFSTQEDVLNEIDKYDYIEIPSPNNFSHFWTTKFSDQQIKIQLQKLIKWAKEKNKIIVAIGEPRYNEKWQKIIHEIYINSTGIENSLHPLFIIKKDMDTFYPEQIYKTTNEMKQEFSFLYDPELIEEIVVKNPNLISSQIEKIQVIKDKLYTPKFDDSHIKLKKLVYENAWKKYGKNLPEIIEQRIEKELTPILNYGFDVIYWISSILVQKSLSDGYLVGSRGSIGSSLVATLSGITEVNPLAPHYICSKCQYFELVKDPMTNSGFDLDDKKCPKCNSFLDKDGQTIPFETFLGFKADKVPDIDLNFSGEYQGKIHDEVKRLFGSKHTFRAGTISTVAEKTAYGYIKKYLETASLDYSDNFVDFLTEKSTGVKRTTGQHPGGIIIIPKEFDVEDFTPVNFPANDTESSWKTTHFDFHAIHDNVLKLDILGHDDPTALKMLEKLTGVNVKDIPKKDEKIISIFTSPKALGISSEEILGEKTGALGIPEFGTNFVRQMLSEAKPKTFADLVSISGLSHGTDVWINNAHYIIQSLGKTLDQVISCRDDIMVDLIKKGVPIDLSFTIMEQVRKGKGLSLEQKRKLIEHGIENWYIESMEKIKYMFPKAHATAYVLMAWRVAFYKVYYPLEYYATYFSTRTEFFDIEIMSKDKLTLESKIKELAYRENLRNDNQLTTKEKNTLPTLYIANEMKARGFNIQNINLKISLANDWIIDKNSKSLIPPFNVIDGLGETLAQKIVDSRNEKEFLSVEDFINRTGINSTLVEKFKSMGIFEQIPETNQIFLI.

The Exonuclease domain occupies 404 to 562 (YVVYDIETTG…YDSSVLTNIF (159 aa)).

This sequence belongs to the DNA polymerase type-C family. PolC subfamily.

The protein localises to the cytoplasm. The enzyme catalyses DNA(n) + a 2'-deoxyribonucleoside 5'-triphosphate = DNA(n+1) + diphosphate. Its function is as follows. Required for replicative DNA synthesis. This DNA polymerase also exhibits 3' to 5' exonuclease activity. In Mycoplasmopsis pulmonis (strain UAB CTIP) (Mycoplasma pulmonis), this protein is DNA polymerase III PolC-type.